A 428-amino-acid chain; its full sequence is Trigger factor (428 aa).

A PPIase FKBP-type domain is found at Gly-163–Pro-248.

The protein belongs to the FKBP-type PPIase family. Tig subfamily.

The protein resides in the cytoplasm. The enzyme catalyses [protein]-peptidylproline (omega=180) = [protein]-peptidylproline (omega=0). Its function is as follows. Involved in protein export. Acts as a chaperone by maintaining the newly synthesized protein in an open conformation. Functions as a peptidyl-prolyl cis-trans isomerase. The polypeptide is Trigger factor (Oceanobacillus iheyensis (strain DSM 14371 / CIP 107618 / JCM 11309 / KCTC 3954 / HTE831)).